The following is a 513-amino-acid chain: Na(+)/H(+) antiporter NhaB (513 aa).

The next 11 helical transmembrane spans lie at 21-41 (ITIV…SPFI), 88-108 (IIAN…IYFM), 119-139 (LLLS…SAAF), 143-163 (FLDA…FYGV), 208-228 (VGTA…LIIA), 247-267 (LPVL…GVFG), 303-323 (ALIG…VGII), 357-377 (LVVF…APII), 389-409 (LALF…VFVA), 447-467 (ATPN…APLI), and 477-497 (MALP…EYIL).

It belongs to the NhaB Na(+)/H(+) (TC 2.A.34) antiporter family.

Its subcellular location is the cell inner membrane. It carries out the reaction 2 Na(+)(in) + 3 H(+)(out) = 2 Na(+)(out) + 3 H(+)(in). In terms of biological role, na(+)/H(+) antiporter that extrudes sodium in exchange for external protons. The polypeptide is Na(+)/H(+) antiporter NhaB (Pasteurella multocida (strain Pm70)).